The sequence spans 245 residues: NADH-quinone oxidoreductase subunit C (245 aa).

Positions 1 to 10 (MSAPQDRTDD) are enriched in basic and acidic residues. Disordered regions lie at residues 1 to 54 (MSAP…GYGG) and 216 to 245 (PQRKDYPLGGVPVEYKGAEIPPPDRRRSYQ). The segment covering 11-28 (GGVPVPVTPAGATGGAPA) has biased composition (low complexity). Gly residues predominate over residues 39–54 (GMFGDQGTGDVSGYGG).

Belongs to the complex I 30 kDa subunit family. In terms of assembly, NDH-1 is composed of 14 different subunits. Subunits NuoB, C, D, E, F, and G constitute the peripheral sector of the complex.

The protein localises to the cell membrane. It carries out the reaction a quinone + NADH + 5 H(+)(in) = a quinol + NAD(+) + 4 H(+)(out). NDH-1 shuttles electrons from NADH, via FMN and iron-sulfur (Fe-S) centers, to quinones in the respiratory chain. The immediate electron acceptor for the enzyme in this species is believed to be a menaquinone. Couples the redox reaction to proton translocation (for every two electrons transferred, four hydrogen ions are translocated across the cytoplasmic membrane), and thus conserves the redox energy in a proton gradient. The polypeptide is NADH-quinone oxidoreductase subunit C (Salinispora tropica (strain ATCC BAA-916 / DSM 44818 / JCM 13857 / NBRC 105044 / CNB-440)).